The chain runs to 239 residues: 2-C-methyl-D-erythritol 4-phosphate cytidylyltransferase (239 aa).

Belongs to the IspD/TarI cytidylyltransferase family. IspD subfamily.

The enzyme catalyses 2-C-methyl-D-erythritol 4-phosphate + CTP + H(+) = 4-CDP-2-C-methyl-D-erythritol + diphosphate. The protein operates within isoprenoid biosynthesis; isopentenyl diphosphate biosynthesis via DXP pathway; isopentenyl diphosphate from 1-deoxy-D-xylulose 5-phosphate: step 2/6. In terms of biological role, catalyzes the formation of 4-diphosphocytidyl-2-C-methyl-D-erythritol from CTP and 2-C-methyl-D-erythritol 4-phosphate (MEP). This Acidobacterium capsulatum (strain ATCC 51196 / DSM 11244 / BCRC 80197 / JCM 7670 / NBRC 15755 / NCIMB 13165 / 161) protein is 2-C-methyl-D-erythritol 4-phosphate cytidylyltransferase.